Consider the following 1756-residue polypeptide: Transposon Ty1-PR2 Gag-Pol polyprotein (1756 aa).

3 stretches are compositionally biased toward polar residues: residues 1–10 (MESQQLSNYP), 48–60 (TKANSQQTTTPAS), and 127–152 (QSQFPQYPSSVGTPLSTPSPESGNTF). 3 disordered regions span residues 1–93 (MESQ…MMTQ), 126–173 (PQSQ…RPPP), and 352–421 (GSRN…SKST). Residues 153–165 (TDSSSADSDMTST) are compositionally biased toward low complexity. The tract at residues 299-401 (NNGIHINNKV…NSKSKTARAH (103 aa)) is RNA-binding. Residues 402 to 418 (NVSTSNNSPSTDNDSIS) are compositionally biased toward low complexity. The For protease activity; shared with dimeric partner role is filled by D461. An integrase-type zinc finger-like region spans residues 583-640 (NVHTSESTRKYPYPFIHRMLAHANAQTIRYSLKNNTITYFNESDVDWSSAIDYQCPDC). The Integrase catalytic domain occupies 660-836 (NSYEPFQYLH…AGLDISTLLP (177 aa)). Mg(2+) contacts are provided by D671 and D736. 3 disordered regions span residues 957–1088 (SKAV…ETEK), 1093–1112 (RSPSIDASPPENNSSHNIVP), and 1131–1188 (DLPL…DNET). Positions 961-970 (SPTDSTPPST) are enriched in low complexity. Residues 1006 to 1016 (STPQISNIEST) show a composition bias toward polar residues. Residues 1039–1054 (ESSHASKSKDFRHSDS) are compositionally biased toward basic and acidic residues. Composition is skewed to polar residues over residues 1055–1083 (YSENETNHTNVPISSTGGTNNKTVPQISD) and 1102–1112 (PENNSSHNIVP). Residues 1179–1213 (KKRSLEDNETEIKVSRDTWNTKNMRSLEPPRSKKR) carry the Bipartite nuclear localization signal motif. Positions 1339–1477 (NNYYITQLDI…DILGLEIKYQ (139 aa)) constitute a Reverse transcriptase Ty1/copia-type domain. Mg(2+) contacts are provided by D1347, D1428, D1429, D1611, E1653, and D1686. In terms of domain architecture, RNase H Ty1/copia-type spans 1611–1753 (DASYGNQPYY…IKTFKLLTNK (143 aa)).

As to quaternary structure, the capsid protein forms a homotrimer, from which the VLPs are assembled. The protease is a homodimer, whose active site consists of two apposed aspartic acid residues. Initially, virus-like particles (VLPs) are composed of the structural unprocessed proteins Gag and Gag-Pol, and also contain the host initiator methionine tRNA (tRNA(i)-Met) which serves as a primer for minus-strand DNA synthesis, and a dimer of genomic Ty RNA. Processing of the polyproteins occurs within the particle and proceeds by an ordered pathway, called maturation. First, the protease (PR) is released by autocatalytic cleavage of the Gag-Pol polyprotein yielding capsid protein p45 and a Pol-p154 precursor protein. This cleavage is a prerequisite for subsequent processing of Pol-p154 at the remaining sites to release the mature structural and catalytic proteins. Maturation takes place prior to the RT reaction and is required to produce transposition-competent VLPs.

It localises to the cytoplasm. The protein localises to the nucleus. It carries out the reaction DNA(n) + a 2'-deoxyribonucleoside 5'-triphosphate = DNA(n+1) + diphosphate. It catalyses the reaction Endonucleolytic cleavage to 5'-phosphomonoester.. Capsid protein (CA) is the structural component of the virus-like particle (VLP), forming the shell that encapsulates the retrotransposons dimeric RNA genome. The particles are assembled from trimer-clustered units and there are holes in the capsid shells that allow for the diffusion of macromolecules. CA also has nucleocapsid-like chaperone activity, promoting primer tRNA(i)-Met annealing to the multipartite primer-binding site (PBS), dimerization of Ty1 RNA and initiation of reverse transcription. Its function is as follows. The aspartyl protease (PR) mediates the proteolytic cleavages of the Gag and Gag-Pol polyproteins after assembly of the VLP. In terms of biological role, reverse transcriptase/ribonuclease H (RT) is a multifunctional enzyme that catalyzes the conversion of the retro-elements RNA genome into dsDNA within the VLP. The enzyme displays a DNA polymerase activity that can copy either DNA or RNA templates, and a ribonuclease H (RNase H) activity that cleaves the RNA strand of RNA-DNA heteroduplexes during plus-strand synthesis and hydrolyzes RNA primers. The conversion leads to a linear dsDNA copy of the retrotransposon that includes long terminal repeats (LTRs) at both ends. Functionally, integrase (IN) targets the VLP to the nucleus, where a subparticle preintegration complex (PIC) containing at least integrase and the newly synthesized dsDNA copy of the retrotransposon must transit the nuclear membrane. Once in the nucleus, integrase performs the integration of the dsDNA into the host genome. The polypeptide is Transposon Ty1-PR2 Gag-Pol polyprotein (TY1B-PR2) (Saccharomyces cerevisiae (strain ATCC 204508 / S288c) (Baker's yeast)).